Here is a 427-residue protein sequence, read N- to C-terminus: Transcription termination factor Rho (427 aa).

In terms of domain architecture, Rho RNA-BD spans 55 to 130 (YFFGEGVLEI…IKIEAINYRP (76 aa)). ATP contacts are provided by residues 173 to 178 (GKGQRG), 185 to 190 (KAGKTT), and R216.

It belongs to the Rho family. Homohexamer. The homohexamer assembles into an open ring structure.

Facilitates transcription termination by a mechanism that involves Rho binding to the nascent RNA, activation of Rho's RNA-dependent ATPase activity, and release of the mRNA from the DNA template. This is Transcription termination factor Rho from Thermotoga maritima (strain ATCC 43589 / DSM 3109 / JCM 10099 / NBRC 100826 / MSB8).